The primary structure comprises 266 residues: Putative carbamate hydrolase RutD (266 aa).

An AB hydrolase-1 domain is found at 14–115 (PVVVLISGLG…TVLISVNGWL (102 aa)).

Belongs to the AB hydrolase superfamily. Hydrolase RutD family.

It catalyses the reaction carbamate + 2 H(+) = NH4(+) + CO2. Functionally, involved in pyrimidine catabolism. May facilitate the hydrolysis of carbamate, a reaction that can also occur spontaneously. The sequence is that of Putative carbamate hydrolase RutD from Shigella sonnei (strain Ss046).